Reading from the N-terminus, the 197-residue chain is Imidazoleglycerol-phosphate dehydratase (197 aa).

Belongs to the imidazoleglycerol-phosphate dehydratase family.

It is found in the cytoplasm. The catalysed reaction is D-erythro-1-(imidazol-4-yl)glycerol 3-phosphate = 3-(imidazol-4-yl)-2-oxopropyl phosphate + H2O. It functions in the pathway amino-acid biosynthesis; L-histidine biosynthesis; L-histidine from 5-phospho-alpha-D-ribose 1-diphosphate: step 6/9. The sequence is that of Imidazoleglycerol-phosphate dehydratase from Streptomyces avermitilis (strain ATCC 31267 / DSM 46492 / JCM 5070 / NBRC 14893 / NCIMB 12804 / NRRL 8165 / MA-4680).